The primary structure comprises 1012 residues: Axonemal dynein light chain domain-containing protein 1 (1012 aa).

The span at 1 to 17 shows a compositional bias: low complexity; sequence MSLPKTPSTPLNSTSTS. The segment at 1-34 is disordered; that stretch reads MSLPKTPSTPLNSTSTSESKKLKVSVAKEGTRGL. Coiled coils occupy residues 317-402, 447-486, and 572-597; these read QRIL…IWSS, EDLALLQKLTQKWRNLVNKLKQEVEQMEESTSETLKIVKD, and SERQYMEEIIKNIQKLYKEYEIRING. A compositionally biased stretch (acidic residues) spans 841–854; it reads PEIDESFKEDEEES. Disordered stretches follow at residues 841 to 879 and 963 to 1012; these read PEIDESFKEDEEESKEDRKLQEENKERAEEQPSTSTEKE and LEEL…KKGH. Composition is skewed to basic and acidic residues over residues 855–879 and 963–987; these read KEDRKLQEENKERAEEQPSTSTEKE and LEELVMTSRKESKEEKENQDEREVK. Over residues 988 to 997 the composition is skewed to acidic residues; sequence EEEEQQEEEE.

In terms of tissue distribution, highly expressed in testis. Highly expressed in the round and late spermatids.

The protein localises to the cytoplasm. Functionally, may be essential for spermiogenesis and male fertility probably by regulating the manchette dynamics, spermatid head shaping and sperm flagellum assembly. The sequence is that of Axonemal dynein light chain domain-containing protein 1 from Homo sapiens (Human).